A 275-amino-acid polypeptide reads, in one-letter code: 4-diphosphocytidyl-2-C-methyl-D-erythritol kinase (275 aa).

Lysine 14 is an active-site residue. 98-108 (PMGAGLGGGSS) contributes to the ATP binding site. The active site involves aspartate 140.

Belongs to the GHMP kinase family. IspE subfamily.

It carries out the reaction 4-CDP-2-C-methyl-D-erythritol + ATP = 4-CDP-2-C-methyl-D-erythritol 2-phosphate + ADP + H(+). It participates in isoprenoid biosynthesis; isopentenyl diphosphate biosynthesis via DXP pathway; isopentenyl diphosphate from 1-deoxy-D-xylulose 5-phosphate: step 3/6. Catalyzes the phosphorylation of the position 2 hydroxy group of 4-diphosphocytidyl-2C-methyl-D-erythritol. The chain is 4-diphosphocytidyl-2-C-methyl-D-erythritol kinase from Francisella philomiragia subsp. philomiragia (strain ATCC 25017 / CCUG 19701 / FSC 153 / O#319-036).